A 469-amino-acid polypeptide reads, in one-letter code: Relaxin-3 receptor 1 (469 aa).

The Extracellular portion of the chain corresponds to 1–81 (MQMADAATIA…ESADTEARVR (81 aa)). Asn-36 and Asn-40 each carry an N-linked (GlcNAc...) asparagine glycan. A helical transmembrane segment spans residues 82-102 (ILISVVYWVVCALGLAGNLLV). At 103-119 (LYLMKSMQGWRKSSINL) the chain is on the cytoplasmic side. The helical transmembrane segment at 120–140 (FVTNLALTDFQFVLTLPFWAV) threads the bilayer. Over 141–156 (ENALDFKWPFGKAMCK) the chain is Extracellular. Cys-155 and Cys-247 are joined by a disulfide. A helical transmembrane segment spans residues 157–177 (IVSMVTSMNMYASVFFLTAMS). Residues 178 to 215 (VTRYHSVASALKSHRTRGHGRGDCCGRSLGDSCCFSAK) lie on the Cytoplasmic side of the membrane. A helical membrane pass occupies residues 216-236 (ALCVWIWALAALASLPSAIFS). The Extracellular portion of the chain corresponds to 237-270 (TTVKVMGEELCLVRFPDKLLGRDRQFWLGLYHSQ). The helical transmembrane segment at 271-291 (KVLLGFVLPLGIIILCYLLLV) threads the bilayer. Residues 292–329 (RFIADRRAAGTKGGAAVAGGRPTGASARRLSKVTKSVT) lie on the Cytoplasmic side of the membrane. A helical membrane pass occupies residues 330 to 350 (IVVLSFFLCWLPNQALTTWSI). Residues 351–356 (LIKFNA) are Extracellular-facing. Residues 357 to 377 (VPFSQEYFLCQVYAFPVSVCL) form a helical membrane-spanning segment. Topologically, residues 378–469 (AHSNSCLNPV…YDLLPSSSAY (92 aa)) are cytoplasmic.

Belongs to the G-protein coupled receptor 1 family. As to expression, expressed predominantly in brain regions. Highest expression in substantia nigra and pituitary, followed by hippocampus, spinal cord, amygdala, caudate nucleus and corpus callosum, quite low level in cerebellum. In peripheral tissues, relatively high levels in adrenal glands, low levels in pancreas, salivary gland, placenta, mammary gland and testis.

It is found in the cell membrane. Receptor for RNL3/relaxin-3. Binding of the ligand inhibit cAMP accumulation. The sequence is that of Relaxin-3 receptor 1 (RXFP3) from Homo sapiens (Human).